Reading from the N-terminus, the 199-residue chain is MACNITNQRQQTLSTSGEALYEILGLQKGASNEDIKKTYRKLALKHHPDKNPDDPAAADKFKEINNAHTILTDMSKRNIYDKYGSLGLYVAEQFGDENVNTYFMLSSWWAKTLFVIIGLLTGCYFCCCLCCCCNCCCGRCRPKSSAPEEDFYVSPEDLEEQIKTDMEKDVDFPVVLQPTNANEKTQLIREGPRSYCTDS.

Phosphoserine occurs at positions 14 and 16. Residues Ala-19 to Gly-84 form the J domain.

In terms of assembly, interacts with the chaperone complex consisting of HSC70 and SGTA. Palmitoylated.

It localises to the membrane. The chain is DnaJ homolog subfamily C member 5B (DNAJC5B) from Ailuropoda melanoleuca (Giant panda).